Reading from the N-terminus, the 270-residue chain is 3-phenylpropionate-dihydrodiol/cinnamic acid-dihydrodiol dehydrogenase (270 aa).

An NAD(+)-binding site is contributed by 10-34; that stretch reads FITGGGSGLGLALVERFIEEGAQVA. Serine 143 lines the substrate pocket. The active-site Proton acceptor is tyrosine 156.

It belongs to the short-chain dehydrogenases/reductases (SDR) family.

It catalyses the reaction 3-(cis-5,6-dihydroxycyclohexa-1,3-dien-1-yl)propanoate + NAD(+) = 3-(2,3-dihydroxyphenyl)propanoate + NADH + H(+). It carries out the reaction (2E)-3-(cis-5,6-dihydroxycyclohexa-1,3-dien-1-yl)prop-2-enoate + NAD(+) = (2E)-3-(2,3-dihydroxyphenyl)prop-2-enoate + NADH + H(+). It participates in aromatic compound metabolism; 3-phenylpropanoate degradation. Functionally, converts 3-phenylpropionate-dihydrodiol (PP-dihydrodiol) and cinnamic acid-dihydrodiol (CI-dihydrodiol) into 3-(2,3-dihydroxylphenyl)propanoic acid (DHPP) and 2,3-dihydroxicinnamic acid (DHCI), respectively. This chain is 3-phenylpropionate-dihydrodiol/cinnamic acid-dihydrodiol dehydrogenase, found in Escherichia coli O157:H7.